A 129-amino-acid chain; its full sequence is Small ribosomal subunit protein uS11c (129 aa).

It belongs to the universal ribosomal protein uS11 family. In terms of assembly, part of the 30S ribosomal subunit.

Its subcellular location is the plastid. The protein localises to the chloroplast. The chain is Small ribosomal subunit protein uS11c from Oltmannsiellopsis viridis (Marine flagellate).